Consider the following 37-residue polypeptide: Large ribosomal subunit protein bL36c (37 aa).

Belongs to the bacterial ribosomal protein bL36 family.

It is found in the plastid. The protein resides in the chloroplast. This is Large ribosomal subunit protein bL36c from Huperzia lucidula (Shining clubmoss).